A 259-amino-acid polypeptide reads, in one-letter code: MENVYISSYSSNEQTSMAVAATDIRELLSQYVDDANLEDLIEWAMEKSSKYYIKNIGNTKSNIEETKFESKNNIGIEYSKDSRNKLSYRNKPSIATNLEYKTLCDMIKGTSGTEKEFLRYLLFGIKCIKKGVEYNIDKIKDVSYNDYFNVLDEKYNTPCPNCKSRNTTPMMIQTRAADEPPLVRHACRDCKQHFKPPKFRAFRNLNVTTQSIHENKEITEILPDNNPSPPESPEPASPIDDGLIRATFDRNDEPPEDDE.

The TFIIS-type zinc-finger motif lies at 155–195 (YNTPCPNCKSRNTTPMMIQTRAADEPPLVRHACRDCKQHFK). Residues Cys-159, Cys-162, Cys-187, and Cys-190 each coordinate Zn(2+). Residues 220-259 (EILPDNNPSPPESPEPASPIDDGLIRATFDRNDEPPEDDE) are disordered. Residues 226–236 (NPSPPESPEPA) show a composition bias toward pro residues.

It belongs to the poxviridae DNA-directed RNA polymerase 30 kDa subunit family. As to quaternary structure, the DNA-dependent RNA polymerase (vRNAP) consists of eight subunits encoded by early viral genes and termed according to their apparent molecular masses Rpo147, Rpo132, Rpo35, Rpo30, Rpo22, Rpo19, Rpo18, and Rpo7. The same holoenzyme, with the addition of the transcription-specificity factor RAP94, is used for early gene expression.

It is found in the virion. The protein resides in the host cytoplasm. The enzyme catalyses RNA(n) + a ribonucleoside 5'-triphosphate = RNA(n+1) + diphosphate. Part of the DNA-dependent RNA polymerase which catalyzes the transcription of viral DNA into RNA using the four ribonucleoside triphosphates as substrates. Responsible for the transcription of early, intermediate and late genes. DNA-dependent RNA polymerase associates with the early transcription factor (ETF), itself composed of OPG118 and OPG134, thereby allowing the early genes transcription. Late transcription, and probably also intermediate transcription, require newly synthesized RNA polymerase. This is DNA-directed RNA polymerase 30 kDa polypeptide (OPG066) from Homo sapiens (Human).